The sequence spans 127 residues: Fatty acid-binding protein, liver-type (127 aa).

This sequence belongs to the calycin superfamily. Fatty-acid binding protein (FABP) family.

Its subcellular location is the cytoplasm. The polypeptide is Fatty acid-binding protein, liver-type (fabp1) (Epinephelus coioides (Orange-spotted grouper)).